Reading from the N-terminus, the 892-residue chain is Ice-binding protein 1 (892 aa).

A signal peptide spans 1-23; sequence MNHSIKKTYLVFTMLLGFILLAG. Cys24 is lipidated: N-palmitoyl cysteine. Cys24 carries S-diacylglycerol cysteine lipidation. 7 BIG2 domains span residues 43–111, 134–205, 221–288, 306–386, 392–471, 478–558, and 565–638; these read TSIA…ITAS, TALA…SLGS, SIAL…ITAD, TSIM…TVTV, TSIA…TNLT, NSIV…NLTV, and SIDV…QASL. Residues 866-869 carry the Ice-binding site motif (T-A/G-X-T/N) motif; sequence TGAN.

Belongs to the ice-binding protein family.

Its subcellular location is the cell outer membrane. In terms of biological role, ice-binding adhesion protein that adsorbs this bacterium onto ice to maintain a favorable position in its aquatic habitat. Inhibits growth of the ice crystals. Has high thermal hysteresis (TH) activity, which is the ability to lower the freezing point of an aqueous solution below its melting point. The TH activity of this protein is approximately 1.4 degrees Celsius at 25 uM and little below 2 degrees Celsius at 80 uM. This Shewanella frigidimarina (strain NCIMB 400) protein is Ice-binding protein 1.